Reading from the N-terminus, the 219-residue chain is Tegument protein UL14 (219 aa).

A disordered region spans residues 159 to 219 (VHTDAPSRPG…GFARDCPDGE (61 aa)). Residues 186 to 202 (APPPETAPSPEPAPGPA) are compositionally biased toward pro residues.

The protein belongs to the alphaherpesvirinae HHV-1 UL14 protein family. Post-translationally, phosphorylated.

The protein localises to the virion tegument. The protein resides in the host cytoplasm. It localises to the host nucleus. In terms of biological role, contributes to the nuclear transport of the viral transcriptional activator VP16 during the early phase of infection. Therefore, participates indirectly in the regulation of the immediate-early gene expression. Additionally, seems to be important for efficient nuclear targeting of capsids. In Human herpesvirus 2 (strain HG52) (HHV-2), this protein is Tegument protein UL14.